Here is a 91-residue protein sequence, read N- to C-terminus: Small ribosomal subunit protein uS19 (91 aa).

This sequence belongs to the universal ribosomal protein uS19 family.

Functionally, protein S19 forms a complex with S13 that binds strongly to the 16S ribosomal RNA. The polypeptide is Small ribosomal subunit protein uS19 (Methylobacillus flagellatus (strain ATCC 51484 / DSM 6875 / VKM B-1610 / KT)).